Consider the following 209-residue polypeptide: 3-demethoxyubiquinol 3-hydroxylase (209 aa).

Fe cation is bound by residues E58, E88, H91, E140, E172, and H175.

This sequence belongs to the COQ7 family. Fe cation is required as a cofactor.

It is found in the cell membrane. The catalysed reaction is a 5-methoxy-2-methyl-3-(all-trans-polyprenyl)benzene-1,4-diol + AH2 + O2 = a 3-demethylubiquinol + A + H2O. Its pathway is cofactor biosynthesis; ubiquinone biosynthesis. Catalyzes the hydroxylation of 2-nonaprenyl-3-methyl-6-methoxy-1,4-benzoquinol during ubiquinone biosynthesis. This chain is 3-demethoxyubiquinol 3-hydroxylase, found in Polaromonas naphthalenivorans (strain CJ2).